Here is a 214-residue protein sequence, read N- to C-terminus: Proteasome subunit beta type-6 (214 aa).

Positions 1-14 (MEAPEWLDNAVDLG) are cleaved as a propeptide — removed in mature form. T15 (nucleophile) is an active-site residue.

The protein belongs to the peptidase T1B family. In terms of assembly, the 26S proteasome consists of a 20S proteasome core and two 19S regulatory subunits. The 20S proteasome core is composed of 28 subunits that are arranged in four stacked rings, resulting in a barrel-shaped structure. The two end rings are each formed by seven alpha subunits, and the two central rings are each formed by seven beta subunits. The catalytic chamber with the active sites is on the inside of the barrel.

It is found in the cytoplasm. The protein resides in the nucleus. It carries out the reaction Cleavage of peptide bonds with very broad specificity.. Functionally, the proteasome is a multicatalytic proteinase complex which is characterized by its ability to cleave peptides with Arg, Phe, Tyr, Leu, and Glu adjacent to the leaving group at neutral or slightly basic pH. The proteasome has an ATP-dependent proteolytic activity. In Dictyostelium discoideum (Social amoeba), this protein is Proteasome subunit beta type-6 (psmB6).